Consider the following 984-residue polypeptide: G patch domain-containing protein TGH homolog (984 aa).

Over residues 130–144 (EHARKQASKEQKERP) the composition is skewed to basic and acidic residues. The disordered stretch occupies residues 130–153 (EHARKQASKEQKERPSAIPGPIPD). The G-patch domain maps to 160–202 (TTSIGVKLLMKMGWRQGRSIRDAHADSLYESRREARKAFLALS). One copy of the SURP motif repeat lies at 408 to 450 (LIEGCAAMVARCGKHIEDFYKEKSKTNTQFNFLNEGDGCSYYA). 4 disordered regions span residues 464–503 (QKPD…SSFP), 679–717 (TRTN…ESSS), 775–806 (LGLD…GISR), and 820–984 (ESAL…HHKR). Basic and acidic residues predominate over residues 473–495 (SSDKLTAENRGKILGERPLDRST). Over residues 679-695 (TRTNEVESSSIAPQHTS) the composition is skewed to polar residues. The span at 697-709 (AGATETEAKGAAT) shows a compositional bias: low complexity. Positions 814–859 (QEIKENESALDKEEIANASADVPSDNVEELGLKYEKQEHRAEKSRS) form a coiled coil. Over residues 843-858 (LGLKYEKQEHRAEKSR) the composition is skewed to basic and acidic residues. Composition is skewed to basic residues over residues 882-892 (SRERRSRHKIR), 905-922 (HRSK…RRSR), and 934-946 (TKRK…HHRT). A compositionally biased stretch (basic and acidic residues) spans 947 to 974 (RNPDTDSSDHEYEERHKSSSRRSSDKDR). The span at 975 to 984 (SRRRSRHHKR) shows a compositional bias: basic residues.

It is found in the nucleus. In terms of biological role, functions as a component of microRNA (miRNA) and small interfering RNA (siRNA) biogenesis. May assist Dicer-like (DCL) proteins to efficiently process and/or recruit the precursors of miRNAs and siRNAs. This is G patch domain-containing protein TGH homolog from Oryza sativa subsp. japonica (Rice).